A 483-amino-acid chain; its full sequence is Altronate oxidoreductase (483 aa).

Ile18 to Ala29 provides a ligand contact to NAD(+).

Belongs to the mannitol dehydrogenase family. UxaB subfamily.

It carries out the reaction D-altronate + NAD(+) = keto-D-tagaturonate + NADH + H(+). It functions in the pathway carbohydrate metabolism; pentose and glucuronate interconversion. This chain is Altronate oxidoreductase, found in Klebsiella pneumoniae subsp. pneumoniae (strain ATCC 700721 / MGH 78578).